The chain runs to 946 residues: Zinc finger protein rotund (946 aa).

Disordered regions lie at residues 10 to 30 (GPQL…GHSD) and 156 to 269 (FRKP…HNLN). A compositionally biased stretch (polar residues) spans 161-176 (NNNGYSWSTGNNNEVV). Positions 177–188 (SHSSNGHTNNHP) are enriched in low complexity. 2 stretches are compositionally biased toward polar residues: residues 198 to 230 (ASAT…SIKS) and 242 to 269 (TCKS…HNLN). 6 C2H2-type zinc fingers span residues 488–510 (YQCK…TQIH), 517–539 (YKCT…TRIH), 545–567 (YRCE…IRTH), 573–597 (YKCR…SRCH), 603–625 (FKCN…IPKH), and 634–656 (HICQ…MQKH). Positions 683–853 (GGSANPANGP…TPSAVGPYDA (171 aa)) are disordered. Low complexity-rich tracts occupy residues 739–762 (HQQQ…QQQQ) and 770–790 (HGVP…QQQQ). Residues 813–822 (TAPNGSQSNG) are compositionally biased toward polar residues. Residues 828–841 (QPHHRMPDPVREDI) are compositionally biased toward basic and acidic residues.

It belongs to the krueppel C2H2-type zinc-finger protein family. As to quaternary structure, interacts with nab; which acts as a corepressor. Isoform rn and isoform roe are expressed in non-overlapping domains in the larval imaginal disks. Isoform rn is first expressed during the early third larval instar in the leg, wing, haltere and antennal part of the eye-antennal imaginal disk. It is observed as a ring in the leg and antenna disks and in the presumptive wing pouch and capitellum of wing and haltere disks respectively. In wing disk it is expressed in 3 concentric domains in the wing pouch. In late third instar, expression of isoform rn in the leg disk is no longer evident, but is maintained in the other disks. Isoform roe appears in the third instar and is confined to the eye part of the eye-antennal imaginal disk in a band of 4-6 cells at the morphogenetic furrow. There is no evidence of roe expression in other imaginal disks.

The protein localises to the nucleus. In terms of biological role, transcription factor involved in imaginal disks development. Isoform rn is required in the wings, antenna, haltere, proboscis and legs disks, while isoform roe is required in the eye disk. Together with nab corepressor, it is involved in the initiation and maintenance of wingless (wg) expression in the wing hinge, by limiting the expression of wg to this compartment. Also required for the epithelial-mesenchymal transition branch of basolateral junctions signaling. The protein is Zinc finger protein rotund of Drosophila melanogaster (Fruit fly).